The chain runs to 899 residues: MLKAVLETTIGSKSKRDLKDYLPTLRNINKLERWALLLADEDFSKETEKLKDELKSGNSLENILERAFTLSREAARRRLKERPYDVQIIAGLALHKGKIIEMKTGEGKTLSSVQAAYLNSLTGDGVIIVTVNDYLAERDSNWMKPVFDLLGVSVGVVLSNMDYELRKAQYAKDITYVTNNELGFDYLRDNMRYDLNEKSLRKFNYCIIDEIDSILIDEARTPLIISGPTEGNTNAYLEVNSLVSFLKECSKDPKTGDYPLEIDDLDGDYTVDEKAKRISFTAKGLNNLEQLLVSKGIISGSMYTDSNFNYVHYMTQALKAHLLFLKNREYIVGDSGVEIVDEFTGRVLTGRRYSDGLHQAIEAKEGVRVANENKTMATITFQNLFRMFDKISGMTGTADTEAKEFHKIYNLDVVVVPTNRLLARIDEDDTIYYTEEFKFNAITDEVYKTYKKGQPVLVGTVSIEKSEILSAMFKSRGIKHEVLNAKNHSREAFIIAEAGAKHAVTIATNMAGRGTDIKLGGNIEHRVRKKIGTNVSLEEFQEAVKNERENYLKDYNEVKSLGGLYVIGSERHESRRIDNQLRGRSGRQGDPGRSRFYVSLEDDLMRLFAGDNLRSLMGKLGMATGEPITHSLLTKSLINAQKRVEDRNFEIRKHLLEYDDVITKQRDFIYAQRNSILKDTAIKDRILVALEEYLSFLLEGTKSSTVSNVFLNEVNSIFAYMLESLGSIENISYLDLKAKLMQIAKANLDEKENLIGRDLFNGFLRYEYLKNIDFKFQEHLANLDSLREAVYLRSYANKNPITEYKEEGFSIFSELIKDIKVSTIRRVLQLKLDSNSSDFKSTKKSRNVKPIHKELSGIVINENKSASNVQVVRSSPKIGRNEPCYCGSGKKYKNCHGKS.

ATP-binding positions include Gln87, 105–109 (GEGKT), and Asp516. Cys884, Cys886, Cys895, and His896 together coordinate Zn(2+).

This sequence belongs to the SecA family. As to quaternary structure, monomer and homodimer. Part of the essential Sec protein translocation apparatus which comprises SecA, SecYEG and auxiliary proteins SecDF. Other proteins may also be involved. Zn(2+) is required as a cofactor.

It is found in the cell inner membrane. The protein resides in the cytoplasm. It catalyses the reaction ATP + H2O + cellular proteinSide 1 = ADP + phosphate + cellular proteinSide 2.. In terms of biological role, part of the Sec protein translocase complex. Interacts with the SecYEG preprotein conducting channel. Has a central role in coupling the hydrolysis of ATP to the transfer of proteins into and across the cell membrane, serving as an ATP-driven molecular motor driving the stepwise translocation of polypeptide chains across the membrane. This chain is Protein translocase subunit SecA, found in Borreliella burgdorferi (strain ZS7) (Borrelia burgdorferi).